A 221-amino-acid chain; its full sequence is Vacuolar protein sorting-associated protein 20 (221 aa).

A lipid anchor (N-myristoyl glycine) is attached at Gly-2. Residues 72–178 are a coiled coil; the sequence is QEHLLQQASD…LNPEKMNNAK (107 aa). The interval 170 to 221 is disordered; sequence NPEKMNNAKVANMPSTEGLPSLPQGEQTEQKEREEFATEERSDTKEPLALLS. Positions 197-215 are enriched in basic and acidic residues; that stretch reads TEQKEREEFATEERSDTKE.

It belongs to the SNF7 family. As to quaternary structure, core component of the ESCRT-III complex (endosomal sorting required for transport complex III). ESCRT-III appears to be sequentially assembled as a flat lattice on the endosome membrane and forms a transient 450 kDa complex that contains DID4, oligomerized SNF7, VPS20 and VPS24. SNF7 oligomerization into a membrane-associated filament is nucleated by association of SNF7 with VPS20; the process is terminated through association of VPS24, possibly by capping the SNF7 filament. VPS24 subsequently associates with DID4/VPS2. Interacts with the VPS4. Interacts with VPS25; the interaction mediates the association with the ESCRT-II complex.

It localises to the endosome membrane. Its subcellular location is the vacuole membrane. Functionally, class E VPS protein implicated in concentration and sorting of cargo proteins of the multivesicular body (MVB) for incorporation into intralumenal vesicles. The lumenal sequestrated membrane proteins will be targeted into the vacuole after fusion of the endosome with the vacuole. Acts a component of the ESCRT-III complex, which appears to be critical for late steps in MVB sorting, such as membrane invagination and final cargo sorting and recruitment of late-acting components of the sorting machinery. The MVB pathway requires the sequential function of ESCRT-O, -I,-II and -III complex assemblies. Required for the oligomerization of SNF7 into a membrane-associated filament. The VPS20-SNF7 subcomplex is responsible for the membrane association of the ESCRT-III complex. Also required for the RIM101 repressor proteolytic activation. The protein is Vacuolar protein sorting-associated protein 20 (VPS20) of Saccharomyces cerevisiae (strain ATCC 204508 / S288c) (Baker's yeast).